The chain runs to 218 residues: Thiopurine S-methyltransferase (218 aa).

S-adenosyl-L-methionine is bound by residues Trp-10, Leu-45, Glu-66, and Arg-123.

Belongs to the class I-like SAM-binding methyltransferase superfamily. TPMT family.

Its subcellular location is the cytoplasm. The catalysed reaction is S-adenosyl-L-methionine + a thiopurine = S-adenosyl-L-homocysteine + a thiopurine S-methylether.. The protein is Thiopurine S-methyltransferase of Xanthomonas axonopodis pv. citri (strain 306).